The sequence spans 516 residues: MIKNEIKILSDIEHIKKRSGMYIGSSANETHERFMFGKWESVQYVPGLVKLIDEIIDNSVDEGIRTKFKFANKINVTIKNNQVTVEDNGRGIPQAMVKTPTGEEIPGPVAAWTIPKAGGNFGDDKERVTGGMNGVGSSLTNIFSVMFVGETGDGQNNIVVRCSNGMENKSWEDIPGKWKGTRVTFIPDFMSFETNELSQVYLDITLDRLQTLAVVYPDIQFTFNGKKVQGNFKKYARQYDEHAIVQEQENCSIAVGRSPDGFRQLTYVNNIHTKNGGHHIDCAMDDICEDLIPQIKRKFKIDVTKARVKECLTIVMFVRDMKNMRLIRQTKERLTSPFGEIRSHIQLDAKKISRDILNNEAILMPIIEAALARKLAAEKAAETKAAKKASKAKVHKHIKANLCGKDADTTLFLTEGDSAIGYLIDVRDKELHGGYPLRGKVLNSWGMSYADMLKNKELFDICAITGLVLGEKAFEEKEDGEWFTFELNGDTIIVNENDEVQINGKWITVGELRKNL.

128–136 contributes to the ATP binding site; it reads VTGGMNGVG. A DNA-binding region spans residues 369–400; that stretch reads AALARKLAAEKAAETKAAKKASKAKVHKHIKA.

Belongs to the type II topoisomerase family. In terms of assembly, part of the DNA topoisomerase complex made of gp39, gp52 and gp60. Mg(2+) is required as a cofactor.

The catalysed reaction is ATP-dependent breakage, passage and rejoining of double-stranded DNA.. Large subunit of the DNA topoisomerase that untwists superhelical DNA. Controls of topological states of double-stranded DNA by transient breakage and subsequent rejoining of DNA strands. This is DNA topoisomerase large subunit (39) from Escherichia coli (Bacteriophage T4).